The primary structure comprises 354 residues: Methionine import ATP-binding protein MetN (354 aa).

The ABC transporter domain maps to 8 to 250; that stretch reads LDHIDITFRQ…PKEALTQEFI (243 aa). An ATP-binding site is contributed by 42–49; that stretch reads GYSGAGKS.

It belongs to the ABC transporter superfamily. Methionine importer (TC 3.A.1.24) family. In terms of assembly, the complex is composed of two ATP-binding proteins (MetN), two transmembrane proteins (MetI) and a solute-binding protein (MetQ).

The protein localises to the cell membrane. It catalyses the reaction L-methionine(out) + ATP + H2O = L-methionine(in) + ADP + phosphate + H(+). The catalysed reaction is D-methionine(out) + ATP + H2O = D-methionine(in) + ADP + phosphate + H(+). Part of the ABC transporter complex MetNIQ involved in methionine import. Responsible for energy coupling to the transport system. This chain is Methionine import ATP-binding protein MetN, found in Streptococcus pyogenes serotype M3 (strain ATCC BAA-595 / MGAS315).